The chain runs to 236 residues: LexA repressor (236 aa).

Residues Phe26–Thr46 constitute a DNA-binding region (H-T-H motif). The segment at Pro85–Arg109 is disordered. Residues Ser157 and Lys195 each act as for autocatalytic cleavage activity in the active site.

It belongs to the peptidase S24 family. As to quaternary structure, homodimer.

The enzyme catalyses Hydrolysis of Ala-|-Gly bond in repressor LexA.. Its function is as follows. Represses a number of genes involved in the response to DNA damage (SOS response), including recA and lexA. In the presence of single-stranded DNA, RecA interacts with LexA causing an autocatalytic cleavage which disrupts the DNA-binding part of LexA, leading to derepression of the SOS regulon and eventually DNA repair. This Rhodopseudomonas palustris (strain ATCC BAA-98 / CGA009) protein is LexA repressor.